The primary structure comprises 743 residues: Amylovoran biosynthesis protein AmsF (743 aa).

An N-terminal signal peptide occupies residues 1 to 27 (MKRRELIRTAFSTIVATAALSSVSARA).

To R.meliloti ExoP.

Its subcellular location is the periplasm. It functions in the pathway glycan metabolism; exopolysaccharide biosynthesis. In terms of biological role, involved in the biosynthesis of amylovoran which functions as a virulence factor. May be involved in the polymerization or late modification of the repeating units. The chain is Amylovoran biosynthesis protein AmsF (amsF) from Erwinia amylovora (Fire blight bacteria).